A 284-amino-acid chain; its full sequence is Protoheme IX farnesyltransferase (284 aa).

Helical transmembrane passes span 13 to 33 (VTVL…TGYP), 35 to 55 (LTVI…SFIL), 84 to 104 (FALL…TYFI), 106 to 126 (LLTA…YTIW), 134 to 154 (NIVI…AAMA), 163 to 183 (VMFL…AIFL), 205 to 225 (VNQI…FYFV), 229 to 249 (MGYL…GFAY), and 264 to 284 (FFFS…DSKI).

This sequence belongs to the UbiA prenyltransferase family. Protoheme IX farnesyltransferase subfamily.

The protein resides in the cell inner membrane. It carries out the reaction heme b + (2E,6E)-farnesyl diphosphate + H2O = Fe(II)-heme o + diphosphate. It participates in porphyrin-containing compound metabolism; heme O biosynthesis; heme O from protoheme: step 1/1. Converts heme B (protoheme IX) to heme O by substitution of the vinyl group on carbon 2 of heme B porphyrin ring with a hydroxyethyl farnesyl side group. In Leptospira biflexa serovar Patoc (strain Patoc 1 / Ames), this protein is Protoheme IX farnesyltransferase.